Here is a 652-residue protein sequence, read N- to C-terminus: Bifunctional protein ThiO/ThiG (652 aa).

The tract at residues 1-366 is thiO; the sequence is MTRDIVIIGG…HYSRSQKQAS (366 aa). Residues 5–19 and 44–46 each bind FAD; these read IVIIGGGVIGLAIAV and AGM. Residue Glu52 participates in glycine binding. Residue Val173 participates in FAD binding. Positions 301 and 327 each coordinate glycine. 325–331 is an FAD binding site; sequence HYRNGIL. The thiG stretch occupies residues 393-652; sequence PLIIAGKSFH…ASSPVTGTIS (260 aa). The Schiff-base intermediate with DXP role is filled by Lys494. Residues Gly555, 581–582, and 603–604 contribute to the 1-deoxy-D-xylulose 5-phosphate site; these read AG and NS.

This sequence in the N-terminal section; belongs to the DAO family. ThiO subfamily. In the C-terminal section; belongs to the ThiG family. Interacts with ThiH and ThiS. It depends on FAD as a cofactor.

The protein localises to the cytoplasm. The catalysed reaction is glycine + O2 + H2O = glyoxylate + H2O2 + NH4(+). The enzyme catalyses [ThiS sulfur-carrier protein]-C-terminal-Gly-aminoethanethioate + 2-iminoacetate + 1-deoxy-D-xylulose 5-phosphate = [ThiS sulfur-carrier protein]-C-terminal Gly-Gly + 2-[(2R,5Z)-2-carboxy-4-methylthiazol-5(2H)-ylidene]ethyl phosphate + 2 H2O + H(+). The protein operates within cofactor biosynthesis; thiamine diphosphate biosynthesis. Its function is as follows. Catalyzes the FAD-dependent oxidative deamination of glycine. Is essential for thiamine biosynthesis since the oxidation of glycine catalyzed by ThiO generates the glycine imine intermediate (dehydroglycine) required for the biosynthesis of the thiazole ring of thiamine pyrophosphate. Functionally, catalyzes the rearrangement of 1-deoxy-D-xylulose 5-phosphate (DXP) to produce the thiazole phosphate moiety of thiamine. Sulfur is provided by the thiocarboxylate moiety of the carrier protein ThiS. In vitro, sulfur can be provided by H(2)S. The sequence is that of Bifunctional protein ThiO/ThiG (thiO/thiG) from Nostoc sp. (strain PCC 7120 / SAG 25.82 / UTEX 2576).